A 338-amino-acid polypeptide reads, in one-letter code: (2Z,6E)-hedycaryol synthase (338 aa).

Residues Asp82 and Glu87 each contribute to the Mg(2+) site. A DDXXXE motif motif is present at residues 82-87 (DDQIDE). Residue Arg175 participates in substrate binding. Asn221 and Ser225 together coordinate Mg(2+). The NXXXSXXXE motif signature appears at 221 to 229 (NDVFSVERE). A substrate-binding site is contributed by Arg228. Glu229 contributes to the Mg(2+) binding site.

Belongs to the terpene synthase family. In terms of assembly, homodimer. The cofactor is Mg(2+).

The catalysed reaction is (2E,6E)-farnesyl diphosphate + H2O = (2Z,6E)-hedycaryol + diphosphate. The protein operates within secondary metabolite biosynthesis; terpenoid biosynthesis. Catalyzes the conversion of (2E,6E)-farnesyl diphosphate (FPP) into (2Z,6E)-hedycaryol via a 1,11-cyclization. The chain is (2Z,6E)-hedycaryol synthase from Kitasatospora setae (strain ATCC 33774 / DSM 43861 / JCM 3304 / KCC A-0304 / NBRC 14216 / KM-6054) (Streptomyces setae).